The sequence spans 310 residues: Probable cell division protein WhiA (310 aa).

Residues 274-308 constitute a DNA-binding region (H-T-H motif); sequence SLKELGTLVPGGPISKSGINHRLRKINQFAEQLQK.

Belongs to the WhiA family.

In terms of biological role, involved in cell division and chromosome segregation. This is Probable cell division protein WhiA from Lactiplantibacillus plantarum (strain ATCC BAA-793 / NCIMB 8826 / WCFS1) (Lactobacillus plantarum).